Consider the following 180-residue polypeptide: Bifunctional protein PyrR 1 (180 aa).

Residues 39–40, 103–111, Arg-136, and Val-160 contribute to the substrate site; these read TR and DDVLFTGRT. A PRPP-binding motif is present at residues 99 to 111; that stretch reads VILVDDVLFTGRT.

This sequence belongs to the purine/pyrimidine phosphoribosyltransferase family. PyrR subfamily. In terms of assembly, homodimer and homohexamer; in equilibrium.

It carries out the reaction UMP + diphosphate = 5-phospho-alpha-D-ribose 1-diphosphate + uracil. Its function is as follows. Regulates transcriptional attenuation of the pyrimidine nucleotide (pyr) operon by binding in a uridine-dependent manner to specific sites on pyr mRNA. This disrupts an antiterminator hairpin in the RNA and favors formation of a downstream transcription terminator, leading to a reduced expression of downstream genes. Functionally, also displays a weak uracil phosphoribosyltransferase activity which is not physiologically significant. This Lactiplantibacillus plantarum (strain ATCC BAA-793 / NCIMB 8826 / WCFS1) (Lactobacillus plantarum) protein is Bifunctional protein PyrR 1 (pyrR1).